The following is a 71-amino-acid chain: DNA-directed RNA polymerase subunit epsilon (71 aa).

Belongs to the RNA polymerase subunit epsilon family. In terms of assembly, RNAP is composed of a core of 2 alpha, a beta and a beta' subunit. The core is associated with a delta subunit, and at least one of epsilon or omega. When a sigma factor is associated with the core the holoenzyme is formed, which can initiate transcription.

The catalysed reaction is RNA(n) + a ribonucleoside 5'-triphosphate = RNA(n+1) + diphosphate. In terms of biological role, a non-essential component of RNA polymerase (RNAP). The chain is DNA-directed RNA polymerase subunit epsilon from Geobacillus kaustophilus (strain HTA426).